The primary structure comprises 596 residues: 3-hydroxy-3-methylglutaryl-coenzyme A reductase 1 (596 aa).

The segment at 1–29 (MDVRRRPVKPLYTSKDASAGEPLKQQEVS) is disordered. The next 2 helical transmembrane spans lie at 41-61 (LYLT…FLLV) and 83-103 (AMVS…IGFV). The linker stretch occupies residues 104–183 (QSFVSRSNSD…SPIIMPALSE (80 aa)). The interval 184 to 596 (DDEEIIQSVV…YNRSIKDISK (413 aa)) is catalytic. Glu278 serves as the catalytic Charge relay system. An N-linked (GlcNAc...) asparagine glycan is attached at Asn342. Lys410 serves as the catalytic Charge relay system. Asn455 carries N-linked (GlcNAc...) asparagine glycosylation. Asp486 serves as the catalytic Charge relay system. The Proton donor role is filled by His584. Asn588 is a glycosylation site (N-linked (GlcNAc...) asparagine).

It belongs to the HMG-CoA reductase family. In terms of tissue distribution, expressed in flower primordia and anthers.

Its subcellular location is the endoplasmic reticulum membrane. It catalyses the reaction (R)-mevalonate + 2 NADP(+) + CoA = (3S)-3-hydroxy-3-methylglutaryl-CoA + 2 NADPH + 2 H(+). Its pathway is metabolic intermediate biosynthesis; (R)-mevalonate biosynthesis; (R)-mevalonate from acetyl-CoA: step 3/3. In terms of biological role, catalyzes the synthesis of mevalonate. The specific precursor of all isoprenoid compounds present in plants. This chain is 3-hydroxy-3-methylglutaryl-coenzyme A reductase 1 (HMG1), found in Solanum tuberosum (Potato).